A 250-amino-acid chain; its full sequence is Pyrroloquinoline-quinone synthase (250 aa).

Belongs to the PqqC family.

The enzyme catalyses 6-(2-amino-2-carboxyethyl)-7,8-dioxo-1,2,3,4,7,8-hexahydroquinoline-2,4-dicarboxylate + 3 O2 = pyrroloquinoline quinone + 2 H2O2 + 2 H2O + H(+). It participates in cofactor biosynthesis; pyrroloquinoline quinone biosynthesis. Its function is as follows. Ring cyclization and eight-electron oxidation of 3a-(2-amino-2-carboxyethyl)-4,5-dioxo-4,5,6,7,8,9-hexahydroquinoline-7,9-dicarboxylic-acid to PQQ. This is Pyrroloquinoline-quinone synthase from Xanthomonas oryzae pv. oryzae (strain KACC10331 / KXO85).